The following is a 56-amino-acid chain: Large ribosomal subunit protein bL32 (56 aa).

The segment at 1 to 26 (MAVQQNKPTRSKRGMRRSHDSLTTAA) is disordered.

The protein belongs to the bacterial ribosomal protein bL32 family.

The sequence is that of Large ribosomal subunit protein bL32 from Erwinia tasmaniensis (strain DSM 17950 / CFBP 7177 / CIP 109463 / NCPPB 4357 / Et1/99).